A 286-amino-acid chain; its full sequence is ATP synthase gamma chain (286 aa).

It belongs to the ATPase gamma chain family. In terms of assembly, F-type ATPases have 2 components, CF(1) - the catalytic core - and CF(0) - the membrane proton channel. CF(1) has five subunits: alpha(3), beta(3), gamma(1), delta(1), epsilon(1). CF(0) has three main subunits: a, b and c.

The protein resides in the cell membrane. In terms of biological role, produces ATP from ADP in the presence of a proton gradient across the membrane. The gamma chain is believed to be important in regulating ATPase activity and the flow of protons through the CF(0) complex. The protein is ATP synthase gamma chain of Malacoplasma penetrans (strain HF-2) (Mycoplasma penetrans).